The following is a 416-amino-acid chain: Adenylosuccinate synthetase (416 aa).

GTP-binding positions include Gly13–Lys19 and Gly41–Thr43. Asp14 acts as the Proton acceptor in catalysis. Residues Asp14 and Gly41 each contribute to the Mg(2+) site. IMP-binding positions include Asp14 to Lys17, Asn39 to His42, Thr126, Arg140, Gln220, Thr235, and Arg299. His42 functions as the Proton donor in the catalytic mechanism. Val295 to Arg301 serves as a coordination point for substrate. GTP contacts are provided by residues Arg301, Lys327–Asp329, and Ser405–Ser407.

It belongs to the adenylosuccinate synthetase family. As to quaternary structure, homodimer. Mg(2+) serves as cofactor.

The protein resides in the cytoplasm. It carries out the reaction IMP + L-aspartate + GTP = N(6)-(1,2-dicarboxyethyl)-AMP + GDP + phosphate + 2 H(+). The protein operates within purine metabolism; AMP biosynthesis via de novo pathway; AMP from IMP: step 1/2. Plays an important role in the de novo pathway of purine nucleotide biosynthesis. Catalyzes the first committed step in the biosynthesis of AMP from IMP. This is Adenylosuccinate synthetase from Campylobacter jejuni subsp. jejuni serotype O:23/36 (strain 81-176).